The sequence spans 167 residues: Urease accessory protein UreE (167 aa).

Belongs to the UreE family.

It localises to the cytoplasm. In terms of biological role, involved in urease metallocenter assembly. Binds nickel. Probably functions as a nickel donor during metallocenter assembly. This chain is Urease accessory protein UreE, found in Pseudomonas aeruginosa (strain LESB58).